The primary structure comprises 338 residues: MVDHEGEDSSPTDGFGHIPVLLHRADELLGPALTVNDPQGGGAVMIDATLGLGGHSEHFLRTYPQLRLIALDRDPHALEIAGGRLAPFADRITFVHTRYDGIEDALDQAGLPAQESVHGILFDLGVSSMQLDESDRGFAYSIDAPLDMRMDPTTGITAAEVLNTYSHGDLARILSTYGEERFAGKIASEIVRQRAKEPFTTSAALVELLYRSIPAATRRTGGHPAKRTFQALRVEVNGELDSLRAAVPAALDALTVGGRVVFMSYQSLEDRVVKQEITPRSKSKSPEGLPVELPGMGPEFRILTRGAERASEQEVEENPRSAPVRLRAAERIARRSAA.

S-adenosyl-L-methionine contacts are provided by residues 53–55 (GGH), Asp72, Tyr99, Asp123, and Gln130. Disordered regions lie at residues 276–297 (EITP…PGMG) and 304–323 (TRGA…RSAP).

This sequence belongs to the methyltransferase superfamily. RsmH family.

The protein resides in the cytoplasm. It catalyses the reaction cytidine(1402) in 16S rRNA + S-adenosyl-L-methionine = N(4)-methylcytidine(1402) in 16S rRNA + S-adenosyl-L-homocysteine + H(+). Specifically methylates the N4 position of cytidine in position 1402 (C1402) of 16S rRNA. This chain is Ribosomal RNA small subunit methyltransferase H, found in Rhodococcus jostii (strain RHA1).